The sequence spans 264 residues: uncharacterized protein (264 aa).

The disordered stretch occupies residues 57–264; sequence RPPASPCPPR…VYPHPHLTAT (208 aa). A compositionally biased stretch (basic residues) spans 140 to 153; sequence GKARRSPGRRRHPH. Residues 154–165 show a composition bias toward low complexity; that stretch reads SSFPQASSPSSP.

This is an uncharacterized protein from Homo sapiens (Human).